Consider the following 120-residue polypeptide: NAD(P)H-quinone oxidoreductase subunit 3, chloroplastic (120 aa).

The next 3 membrane-spanning stretches (helical) occupy residues 9-29 (IFWT…WISG), 64-84 (MFAL…PWAM), and 88-108 (VLGV…VVGL).

The protein belongs to the complex I subunit 3 family. As to quaternary structure, NDH is composed of at least 16 different subunits, 5 of which are encoded in the nucleus.

It localises to the plastid. The protein localises to the chloroplast thylakoid membrane. The catalysed reaction is a plastoquinone + NADH + (n+1) H(+)(in) = a plastoquinol + NAD(+) + n H(+)(out). It catalyses the reaction a plastoquinone + NADPH + (n+1) H(+)(in) = a plastoquinol + NADP(+) + n H(+)(out). Functionally, NDH shuttles electrons from NAD(P)H:plastoquinone, via FMN and iron-sulfur (Fe-S) centers, to quinones in the photosynthetic chain and possibly in a chloroplast respiratory chain. The immediate electron acceptor for the enzyme in this species is believed to be plastoquinone. Couples the redox reaction to proton translocation, and thus conserves the redox energy in a proton gradient. This chain is NAD(P)H-quinone oxidoreductase subunit 3, chloroplastic, found in Lolium perenne (Perennial ryegrass).